The sequence spans 527 residues: MTQQAAEVAKRRTFAIISHPDAGKTTITEKLLLMGKAISVAGTVKSRKSDRHATSDWMEMEKQRGISITTSVMQFPYRDHMINLLDTPGHEDFSEDTYRTLTAVDSALMVLDGGKGVEPRTIALMDVCRLRDTPIVSFINKLDRDIRDPIELLDEIEAVLKIKAAPITWPIGCYRDFKGVYHLADDYIIVYTAGHGHERTDTKIIQNLDSDEARAHLGDEYDRFVEQLELVQGACHEFNQQEFIDGQLTPVFFGTALGNFGVDHVLDAVVNWAPMPLARVANERTVEPEEEKFAGFVFKIQANMDPKHRDRIAFMRICSGRYEKGMKMRHVRLGKDVRIGDALTFFSSEREQLEEAYAGDIIGLHNHGTIQIGDTFTEGEALGFTGIPHFAPELFRRVRLKDPLKSKQLRQGLQQLAEEGATQVFFPQRSNDIILGAVGVLQFDVVASRLKEEYKVECAYEPITVWSARWIDCADKKKLEEFENKAVENLAVDGGGHLTYLAPTRVNLALMEERWPDVKFSATREHH.

Positions 9–277 (AKRRTFAIIS…AVVNWAPMPL (269 aa)) constitute a tr-type G domain. GTP-binding positions include 18 to 25 (SHPDAGKT), 86 to 90 (DTPGH), and 140 to 143 (NKLD).

The protein belongs to the TRAFAC class translation factor GTPase superfamily. Classic translation factor GTPase family. PrfC subfamily.

The protein localises to the cytoplasm. Increases the formation of ribosomal termination complexes and stimulates activities of RF-1 and RF-2. It binds guanine nucleotides and has strong preference for UGA stop codons. It may interact directly with the ribosome. The stimulation of RF-1 and RF-2 is significantly reduced by GTP and GDP, but not by GMP. The chain is Peptide chain release factor 3 from Pseudomonas syringae pv. tomato (strain ATCC BAA-871 / DC3000).